The chain runs to 821 residues: Calpain-3 (821 aa).

The disordered stretch occupies residues 1 to 34 (MPTVISASMAPRTGASQVPRTMPQAAQGKGTEAG). A Calpain catalytic domain is found at 73–417 (LYLDPEFPPD…FTKLEICNLT (345 aa)). Residues Cys-128, His-334, and Asn-358 contribute to the active site. The interval 418 to 586 (ADALESDKLQ…KRNLSEEVEN (169 aa)) is domain III. Residues 587-649 (TISVDRPVRK…EPSNTDQESE (63 aa)) are linker. A disordered region spans residues 603-652 (IFVSDRANSNKELGVDQESEEGQDKTSPDKQEKSPKPEPSNTDQESEEQQ). Over residues 624 to 638 (GQDKTSPDKQEKSPK) the composition is skewed to basic and acidic residues. Residues 641–652 (PSNTDQESEEQQ) are compositionally biased toward polar residues. EF-hand domains are found at residues 649–683 (EEQQQFRNIFRQIAGDDMEICADELKNVLNRVVNK), 692–725 (FTLESCRSMIALMDTDGSGRLNLQEFHHLWKKIK), 722–757 (KKIKSWQKIFKHYDTDQSGTINSYEMRNAVNDAGFH), and 787–821 (VRLEGMFRAFNAFDKDGDGIIKLNVLEWLQLTMYA). Residues 650-821 (EQQQFRNIFR…LEWLQLTMYA (172 aa)) are domain IV. Ca(2+) is bound by residues Ala-662, Asp-665, Glu-667, Glu-672, Asp-705, Asp-707, Ser-709, Arg-711, Glu-716, Asp-735, Asp-737, Ser-739, Thr-741, Glu-746, Asp-800, Asp-802, Asp-804, and Ile-806.

This sequence belongs to the peptidase C2 family. As to quaternary structure, homodimer; via EF-hand domain 4. Interacts with TTN/titin. Interacts with CMYA5; this interaction, which results in CMYA5 proteolysis, may protect CAPN3 from autolysis. Interacts with SIMC1. Interacts with UTP25; the interaction is required for CAPN3 translocation to the nucleolus. As to expression, skeletal muscle.

The protein resides in the cytoplasm. Its subcellular location is the nucleus. It is found in the nucleolus. It catalyses the reaction Broad endopeptidase activity.. Activated by micromolar concentrations of calcium and inhibited by calpastatin. Calcium-regulated non-lysosomal thiol-protease. Proteolytically cleaves CTBP1. Mediates, with UTP25, the proteasome-independent degradation of p53/TP53. The protein is Calpain-3 (CAPN3) of Sus scrofa (Pig).